The sequence spans 257 residues: Adenosylcobinamide-GDP ribazoletransferase (257 aa).

The next 6 membrane-spanning stretches (helical) occupy residues 7–27 (QLTLFFIAMGFFTRIPMPTWV), 39–59 (RYFGLIGLLVGGICALVYEIT), 61–81 (GFLPVSVSIIFAMIAGLVVTG), 113–133 (IGTYGALALVMGLMLKFILLS), 143–163 (VVTALIVGHTLSRVMAASLIF), and 196–216 (VLVLWCSGLSGGLYIAIGLVL).

Belongs to the CobS family. The cofactor is Mg(2+).

It is found in the cell inner membrane. The catalysed reaction is alpha-ribazole + adenosylcob(III)inamide-GDP = adenosylcob(III)alamin + GMP + H(+). The enzyme catalyses alpha-ribazole 5'-phosphate + adenosylcob(III)inamide-GDP = adenosylcob(III)alamin 5'-phosphate + GMP + H(+). It functions in the pathway cofactor biosynthesis; adenosylcobalamin biosynthesis; adenosylcobalamin from cob(II)yrinate a,c-diamide: step 7/7. Functionally, joins adenosylcobinamide-GDP and alpha-ribazole to generate adenosylcobalamin (Ado-cobalamin). Also synthesizes adenosylcobalamin 5'-phosphate from adenosylcobinamide-GDP and alpha-ribazole 5'-phosphate. This Shewanella woodyi (strain ATCC 51908 / MS32) protein is Adenosylcobinamide-GDP ribazoletransferase.